We begin with the raw amino-acid sequence, 555 residues long: Probable portal protein (555 aa).

The protein belongs to the podoviridae head-to-tail connector protein family. In terms of assembly, homododecamer.

It is found in the virion. Forms the portal vertex of the capsid. This portal plays critical roles in head assembly, genome packaging, neck/tail attachment, and genome ejection. The portal protein multimerizes as a single ring-shaped homododecamer arranged around a central channel. This is Probable portal protein from Bordetella bronchiseptica (Alcaligenes bronchisepticus).